Reading from the N-terminus, the 995-residue chain is Epididymis-specific alpha-mannosidase (995 aa).

Positions 1 to 21 (MGPHSWLPLFMQLALLGPQWA) are cleaved as a signal peptide. Residues His36, Asp38, and Asp151 each coordinate Zn(2+). Asp151 acts as the Nucleophile in catalysis. N-linked (GlcNAc...) asparagine glycosylation is present at Asn285. His411 contributes to the Zn(2+) binding site. Residues Asn593, Asn625, Asn657, Asn733, Asn793, Asn875, and Asn977 are each glycosylated (N-linked (GlcNAc...) asparagine). Residues 956–977 (TEDGHHHRGSSRRPLPPLRGPN) form a disordered region.

This sequence belongs to the glycosyl hydrolase 38 family. It depends on Zn(2+) as a cofactor. Processed into a 27 kDa fragment localized on the equatorial segment and the apical rim of the head of mature sperm. Specific to the caput and corpus of the epididymis.

The protein resides in the secreted. It carries out the reaction Hydrolysis of terminal, non-reducing alpha-D-mannose residues in alpha-D-mannosides.. Can digest both p-nitro-phenyl-alpha-D-mannoside and high mannose oligosaccharide (Man(8)-GlcNAc(2)). May be involved in sperm maturation. Has a possible role in specific sperm-egg interaction since sperm surface mannosidase acts like a receptor for mannose-containing oligosaccharides located on the zona pellucida. This chain is Epididymis-specific alpha-mannosidase (MAN2B2), found in Sus scrofa (Pig).